The sequence spans 326 residues: Probable cell division protein WhiA (326 aa).

A DNA-binding region (H-T-H motif) is located at residues 275–308 (SLDELGRLADPPMTKDAIAGRIRRLLAMADKRAL).

It belongs to the WhiA family.

Its function is as follows. Involved in cell division and chromosome segregation. This chain is Probable cell division protein WhiA, found in Arthrobacter sp. (strain FB24).